The primary structure comprises 139 residues: Histone H2B.11 (139 aa).

Over residues 1-39 the composition is skewed to basic and acidic residues; sequence MAPKAEKKPAEKKPVEEKAEKKPKAEKRVPGAKEGGGEK. The tract at residues 1–47 is disordered; that stretch reads MAPKAEKKPAEKKPVEEKAEKKPKAEKRVPGAKEGGGEKKGKKKAKK. An N6-acetyllysine mark is found at Lys-7 and Lys-27. Residue Lys-135 forms a Glycyl lysine isopeptide (Lys-Gly) (interchain with G-Cter in ubiquitin) linkage.

The protein belongs to the histone H2B family. In terms of assembly, the nucleosome is a histone octamer containing two molecules each of H2A, H2B, H3 and H4 assembled in one H3-H4 heterotetramer and two H2A-H2B heterodimers. The octamer wraps approximately 147 bp of DNA. Can be acetylated to form H2BK6ac and H2BK33ac. In terms of processing, monoubiquitinated by BRE1 to form H2BK143ub1 and deubiquitinated by UBP26. Required for heterochromatic histone H3 di- and trimethylation at H3K4me. May give a specific tag for epigenetic transcriptional activation.

Its subcellular location is the nucleus. It localises to the chromosome. Functionally, core component of nucleosome. Nucleosomes wrap and compact DNA into chromatin, limiting DNA accessibility to the cellular machineries which require DNA as a template. Histones thereby play a central role in transcription regulation, DNA repair, DNA replication and chromosomal stability. DNA accessibility is regulated via a complex set of post-translational modifications of histones, also called histone code, and nucleosome remodeling. The chain is Histone H2B.11 (H2B.11) from Oryza sativa subsp. indica (Rice).